The chain runs to 275 residues: Glutamate racemase (275 aa).

Substrate is bound by residues 12–13 (DS) and 44–45 (YG). Catalysis depends on cysteine 75, which acts as the Proton donor/acceptor. 76 to 77 (NT) provides a ligand contact to substrate. Residue cysteine 185 is the Proton donor/acceptor of the active site. 186–187 (TH) contributes to the substrate binding site.

Belongs to the aspartate/glutamate racemases family.

It catalyses the reaction L-glutamate = D-glutamate. It functions in the pathway cell wall biogenesis; peptidoglycan biosynthesis. In terms of biological role, provides the (R)-glutamate required for cell wall biosynthesis. The sequence is that of Glutamate racemase from Mycobacterium avium (strain 104).